Reading from the N-terminus, the 547-residue chain is Glucose-6-phosphate isomerase (547 aa).

Catalysis depends on glutamate 350, which acts as the Proton donor. Catalysis depends on residues histidine 381 and lysine 510.

Belongs to the GPI family.

Its subcellular location is the cytoplasm. It carries out the reaction alpha-D-glucose 6-phosphate = beta-D-fructose 6-phosphate. The protein operates within carbohydrate biosynthesis; gluconeogenesis. It functions in the pathway carbohydrate degradation; glycolysis; D-glyceraldehyde 3-phosphate and glycerone phosphate from D-glucose: step 2/4. Functionally, catalyzes the reversible isomerization of glucose-6-phosphate to fructose-6-phosphate. The protein is Glucose-6-phosphate isomerase of Mesorhizobium japonicum (strain LMG 29417 / CECT 9101 / MAFF 303099) (Mesorhizobium loti (strain MAFF 303099)).